A 224-amino-acid polypeptide reads, in one-letter code: Late embryogenesis abundant protein, group 3 (224 aa).

Disordered stretches follow at residues 1-169 and 193-224; these read MASN…KDKT and NTLG…TRNH. Positions 13–23 are enriched in basic and acidic residues; that stretch reads GETKARNEEKT. 5 consecutive repeat copies span residues 26 to 36, 37 to 47, 48 to 58, 59 to 69, and 70 to 80. Residues 26–153 are 12 X 11 AA tandem repeats; that stretch reads VMGATKDKAG…TEAAKQKASE (128 aa). Composition is skewed to basic and acidic residues over residues 41–85, 92–109, and 120–151; these read TKQK…KDKT, AKEK…RAAQ, and EKTE…KQKA. One copy of the 6; truncated repeat lies at 81-87; it reads AKDKTAQ. 5 repeat units span residues 88 to 98, 99 to 109, 121 to 131, 132 to 142, and 143 to 153. Over residues 200–224 the composition is skewed to low complexity; it reads DNTITTKDNTTGATTKDTTTTTRNH.

Belongs to the LEA type 4 family.

This is Late embryogenesis abundant protein, group 3 from Triticum aestivum (Wheat).